A 423-amino-acid polypeptide reads, in one-letter code: Ferrochelatase, mitochondrial (423 aa).

The transit peptide at 1-40 (MIRFCPSCFALKRTAPVLNHTSRLGNYFNNTFSKFSVNRM) directs the protein to the mitochondrion. Cys200 serves as a coordination point for [2Fe-2S] cluster. Asp385 is an active-site residue. 3 residues coordinate [2Fe-2S] cluster: Cys405, Cys408, and Cys413.

This sequence belongs to the ferrochelatase family. As to quaternary structure, monomer. [2Fe-2S] cluster is required as a cofactor.

Its subcellular location is the mitochondrion inner membrane. It localises to the cytoplasm. It is found in the nucleus. The enzyme catalyses heme b + 2 H(+) = protoporphyrin IX + Fe(2+). It functions in the pathway porphyrin-containing compound metabolism; protoheme biosynthesis; protoheme from protoporphyrin-IX: step 1/1. Its function is as follows. Catalyzes the ferrous insertion into protoporphyrin IX. The protein is Ferrochelatase, mitochondrial (hem15) of Schizosaccharomyces pombe (strain 972 / ATCC 24843) (Fission yeast).